The following is a 347-amino-acid chain: NADH-ubiquinone oxidoreductase chain 2 (347 aa).

The next 10 membrane-spanning stretches (helical) occupy residues 4 to 21 (LALI…VIVM), 26 to 44 (WLLV…IPVL), 59 to 79 (YFLT…TNLL), 93 to 115 (LAST…HFWV), 149 to 169 (LNLN…GWGG), 178 to 198 (ILAY…TYNP), 200 to 220 (LTLL…MLFM), 241 to 261 (ATSV…SGFL), 274 to 294 (ESIF…YFYM), and 323 to 343 (TPLL…APIL).

Belongs to the complex I subunit 2 family. In terms of assembly, core subunit of respiratory chain NADH dehydrogenase (Complex I) which is composed of 45 different subunits. Interacts with TMEM242.

The protein localises to the mitochondrion inner membrane. It carries out the reaction a ubiquinone + NADH + 5 H(+)(in) = a ubiquinol + NAD(+) + 4 H(+)(out). Its function is as follows. Core subunit of the mitochondrial membrane respiratory chain NADH dehydrogenase (Complex I) which catalyzes electron transfer from NADH through the respiratory chain, using ubiquinone as an electron acceptor. Essential for the catalytic activity and assembly of complex I. The sequence is that of NADH-ubiquinone oxidoreductase chain 2 from Cardioderma cor (Heart-nosed bat).